Reading from the N-terminus, the 309-residue chain is MACKNPKKFFPIRKSPVLRDGAFKGKLVLVTGGGTGIGKAIATTFAHLRATVVIAARRMEKLEQTARDITKITGGTCEPFQMDIKDPGMVSDAFDKIDMKFGKVPEILVNNAAGNFIMATELLSSNAYGTIIDIVLKGTFNVTTELGKRCIQNKTGASITSITAGYARAGAPFIVPSAVSKAGVETMTKSLATEWSKYGLRFNAVSPGPIPTKGAWGRLNSGEMGDIAEKMKFLNPEGRVGSPEEVANLVAFISSDHMSFLNGAIIDLDGGQQHFNHGSHMGDFLHSWDHKNWEDAENLIRGRTGKEKA.

Residues valine 28–glutamate 60, glycine 32–isoleucine 37, arginine 57, and aspartate 83 each bind NADP(+). Arginine 57 contributes to the substrate binding site. Residues phenylalanine 116 and serine 124 each contribute to the substrate site. Catalysis depends on tyrosine 166, which acts as the Proton acceptor. Residues lysine 181 and proline 207–isoleucine 210 contribute to the NADP(+) site. Arginine 218 contributes to the substrate binding site.

This sequence belongs to the short-chain dehydrogenases/reductases (SDR) family. 2,4-dienoyl-CoA reductase subfamily.

It catalyses the reaction a (2E,4E)-dienoyl-CoA + NADPH + H(+) = a 4,5-saturated-(3E)-enoyl-CoA + NADP(+). The enzyme catalyses a (2E,4Z)-dienoyl-CoA + NADPH + H(+) = a 4,5-saturated-(3E)-enoyl-CoA + NADP(+). Its function is as follows. Auxiliary enzyme of beta-oxidation. It participates in the metabolism of unsaturated fatty enoyl-CoA esters having double bonds in both even- and odd-numbered positions. Catalyzes the NADP-dependent reduction of 2,4-dienoyl-CoA to yield trans-3-enoyl-CoA. The chain is Probable 2,4-dienoyl-CoA reductase decr-1.2 [(3E)-enoyl-CoA-producing] from Caenorhabditis elegans.